The following is a 201-amino-acid chain: Ras-related protein Rab-10 (201 aa).

16–23 contributes to the GTP binding site; sequence GDSGVGKT. An Effector region motif is present at residues 38–46; it reads FISTIGIDF. GTP contacts are provided by residues 64 to 68, 122 to 125, and 152 to 154; these read DTAGQ, NKCD, and SAK. The disordered stretch occupies residues 175-201; the sequence is PDSTDEQSRDTVNPVQPQRQSSSGGCC. Polar residues predominate over residues 184–201; sequence DTVNPVQPQRQSSSGGCC. S-geranylgeranyl cysteine attachment occurs at residues Cys200 and Cys201.

It belongs to the small GTPase superfamily. Rab family. As to quaternary structure, interacts (GTP-bound form) with ehbp-1 (via C-terminal coiled coil). Interacts (GTP-bound form) with cnt-1 (via C-terminal ankyrin repeat). Interacts (GTP-bound form) with rab-5 GAP, tbc-2 (via putative coiled coil domain). Interacts (GTP-bound form) with amph-1. Almost ubiquitously expressed. Expressed in intestine, hypodermis, seam cells, body-wall muscles, many neurons, oviduct sheath cell, spermatheca, coelomocytes and pharyngeal and nerve ring.

Its subcellular location is the early endosome membrane. The protein resides in the late endosome membrane. The protein localises to the golgi apparatus membrane. It is found in the endosome membrane. The enzyme catalyses GTP + H2O = GDP + phosphate + H(+). Rab activation is generally mediated by a guanine exchange factor (GEF), while inactivation through hydrolysis of bound GTP is catalyzed by a GTPase activating protein (GAP). Tbc-4 is a likely GAP of this rab. Denn-4 is a putative GEF of this rab. Its function is as follows. The small GTPases Rab are key regulators of intracellular membrane trafficking, from the formation of transport vesicles to their fusion with membranes. Rabs cycle between an inactive GDP-bound form and an active GTP-bound form that is able to recruit to membranes different set of downstream effectors directly responsible for vesicle formation, movement, tethering and fusion. Required for basolateral endocytic recycling, the return of macromolecules and fluid from endosomes to the plasma membrane, in polarized epithelial cells of the intestine upstream of rme-1. Involved in the formation of the endosomal tubular network that is required for basolateral recycling of clathrin-independent endocytic cargo such as daf-4 in the intestine. Required for the recruitment of cnt-1 effector to endosomal membranes in the intestinal epithelium, which is important for the regulation of levels of endosomal phosphatidylinositol-4,5-bisphosphate, a key phosphoinositide in membrane traffic, and for the recruitment of endosomal membrane-bending proteins, rme-1 and sdpn-1. Recruits the rab-5 GTPase-activating protein tbc-2 to endosomes where it then inactivates rab-5 resulting in removal of rab-5 from membranes, which is necessary for cargo transport from early endosomes to recycling endosomes in the basolateral intestine. Regulates recycling of synaptic membrane AMPA glutamate receptor, glr-1, from intracellular endosomal compartments back to synapses in a cholesterol-dependent endocytosis pathway functioning after clathrin-independent endocytosis in command interneurons. Regulates neuropeptide release from dense core vesicles (DCVs) of cholinergic motoneurons in cooperation with rab-5. They reciprocally recruit each other's inactivating GAP molecule leading to local exclusion of one or the other rab protein at the Golgi-endosomal interphase at an essential stage during DCV sorting. Regulates membrane trafficking of membranes and dendrite proteins from the Golgi and/or endosomal compartments to plasma membrane during dendrite morphogenesis together with the exocyst complex in the multi-dendritic PVD sensory neurons acting in a cell-autonomous manner and requiring its GTPase activity. Functions cell-autonomously together with the exocyst complex to regulate dendrite morphogenesis and anterior-posterior patterning of the PVD neurons dendritic arbor by balancing the anterograde and retrograde transport via molecular motors unc-116 (kinesin heavy chain) and dhc-1 (dynein heavy chain) to appropriately transport branching factors, such as dma-1, to the specific subcellular regions of the developing dendrite in its GTPase activity-dependent manner. This chain is Ras-related protein Rab-10, found in Caenorhabditis elegans.